Consider the following 317-residue polypeptide: Osteopontin (317 aa).

Positions 1–16 are cleaved as a signal peptide; it reads MRLAVVCFCLFGLASC. Serine 26, serine 27, serine 60, serine 62, and serine 63 each carry phosphoserine. Positions 43–297 are disordered; sequence WLKPDPSQKQ…LVLDPKSKED (255 aa). Positions 49–63 are enriched in polar residues; it reads SQKQNLLAPQNSVSS. Threonine 66 is modified (phosphothreonine). Serine 76, serine 78, serine 81, serine 106, serine 109, serine 112, serine 115, and serine 118 each carry phosphoserine. The span at 86-110 shows a compositional bias: acidic residues; the sequence is DDDDDDDDDGDHAESEDSVNSDESD. O-linked (GalNAc...) threonine glycans are attached at residues threonine 123, threonine 132, and threonine 137. Residues 144–146 carry the Cell attachment site motif; that stretch reads RGD. Threonine 170 and threonine 175 each carry phosphothreonine. Positions 174-187 are enriched in basic and acidic residues; the sequence is LTSRMKSQESDEAI. A phosphoserine mark is found at serine 176, serine 180, serine 200, serine 204, serine 209, serine 213, and serine 219. The span at 197–216 shows a compositional bias: polar residues; it reads SVPSDQDSNGKTSHESSQLD. O-linked (Xyl...) (chondroitin sulfate) serine glycosylation is present at serine 219. A Phosphothreonine modification is found at threonine 222. Composition is skewed to basic and acidic residues over residues 223–240 and 248–263; these read HSLE…HEST and SAEK…RSDA. A phosphoserine mark is found at serine 224, serine 228, serine 257, serine 261, serine 266, serine 270, serine 273, serine 278, serine 283, serine 294, serine 306, serine 311, serine 313, and serine 314. Positions 273 to 297 are enriched in basic and acidic residues; it reads SLEHQSHEFHSHEDKLVLDPKSKED. Serine 311 carries an O-linked (Xyl...) (chondroitin sulfate) serine glycan.

This sequence belongs to the osteopontin family. In terms of assembly, interacts (via N-terminus) with integrin ITGA9:ITGB1. In terms of processing, extensively phosphorylated by FAM20C in the extracellular medium at multiple sites within the S-x-E/pS motif. The phosphorylated form inhibits hydroxyapatite crystallization. Dephosphorylation via a mechanism involving ALPL/TNAP promotes hydroxyapatite crystallization. Post-translationally, O-glycosylated. Forms covalent cross-links mediated by transglutaminase TGM2, between a glutamine and the epsilon-amino group of a lysine residue, forming homopolymers and heteropolymers, increasing its collagen binding properties.

The protein localises to the secreted. Its function is as follows. Major non-collagenous bone protein that binds tightly to hydroxyapatite. Appears to form an integral part of the mineralized matrix. Probably important to cell-matrix interaction. Acts as a cytokine involved in enhancing production of interferon-gamma and interleukin-12 and reducing production of interleukin-10 and is essential in the pathway that leads to type I immunity. The chain is Osteopontin (Spp1) from Rattus norvegicus (Rat).